We begin with the raw amino-acid sequence, 151 residues long: Methylglyoxal synthase (151 aa).

An MGS-like domain is found at 1 to 151 (MKKTTRTMAA…DYQAYLAERT (151 aa)). Substrate-binding positions include His19, Lys23, 45-48 (TGTT), and 65-66 (SG). The Proton donor/acceptor role is filled by Asp71. Residue His98 coordinates substrate.

The protein belongs to the methylglyoxal synthase family.

It carries out the reaction dihydroxyacetone phosphate = methylglyoxal + phosphate. Catalyzes the formation of methylglyoxal from dihydroxyacetone phosphate. In Vibrio cholerae serotype O1 (strain ATCC 39541 / Classical Ogawa 395 / O395), this protein is Methylglyoxal synthase.